The primary structure comprises 79 residues: ATP synthase subunit c (79 aa).

A run of 2 helical transmembrane segments spans residues Ile10–Leu30 and Phe52–Tyr72.

The protein belongs to the ATPase C chain family. As to quaternary structure, F-type ATPases have 2 components, F(1) - the catalytic core - and F(0) - the membrane proton channel. F(1) has five subunits: alpha(3), beta(3), gamma(1), delta(1), epsilon(1). F(0) has three main subunits: a(1), b(2) and c(10-14). The alpha and beta chains form an alternating ring which encloses part of the gamma chain. F(1) is attached to F(0) by a central stalk formed by the gamma and epsilon chains, while a peripheral stalk is formed by the delta and b chains.

The protein resides in the cell inner membrane. In terms of biological role, f(1)F(0) ATP synthase produces ATP from ADP in the presence of a proton or sodium gradient. F-type ATPases consist of two structural domains, F(1) containing the extramembraneous catalytic core and F(0) containing the membrane proton channel, linked together by a central stalk and a peripheral stalk. During catalysis, ATP synthesis in the catalytic domain of F(1) is coupled via a rotary mechanism of the central stalk subunits to proton translocation. Key component of the F(0) channel; it plays a direct role in translocation across the membrane. A homomeric c-ring of between 10-14 subunits forms the central stalk rotor element with the F(1) delta and epsilon subunits. This chain is ATP synthase subunit c, found in Thiobacillus denitrificans (strain ATCC 25259 / T1).